Consider the following 257-residue polypeptide: MADTWSIGAHAFTSRLLVGTGKYPDFPTMQRALAASGAEVVTVAVRRLDLSKKGEESLLAWIPKGMKLLPNTAACFTAEEAIRTARLGRELEMGDLVKLEVIGDRRTLFPDVEGLIQAAKVLVKEGFTVLPYTNDDPVTAKKLEDAGCAAVMPLGAPIGSGLGLRNPYNLRIIMETVQVPVLVDAGVGTASDAALAMELGAVAVLMNTAIAEAKDPVLMAEAMRAGVEGGRKAFLAGRIPMKLHAAASSPMSGLIGS.

The Schiff-base intermediate with DXP role is filled by K98. 1-deoxy-D-xylulose 5-phosphate contacts are provided by residues G159, 185–186 (AG), and 207–208 (NT).

Belongs to the ThiG family. In terms of assembly, homotetramer. Forms heterodimers with either ThiH or ThiS.

The protein resides in the cytoplasm. The catalysed reaction is [ThiS sulfur-carrier protein]-C-terminal-Gly-aminoethanethioate + 2-iminoacetate + 1-deoxy-D-xylulose 5-phosphate = [ThiS sulfur-carrier protein]-C-terminal Gly-Gly + 2-[(2R,5Z)-2-carboxy-4-methylthiazol-5(2H)-ylidene]ethyl phosphate + 2 H2O + H(+). It participates in cofactor biosynthesis; thiamine diphosphate biosynthesis. Its function is as follows. Catalyzes the rearrangement of 1-deoxy-D-xylulose 5-phosphate (DXP) to produce the thiazole phosphate moiety of thiamine. Sulfur is provided by the thiocarboxylate moiety of the carrier protein ThiS. In vitro, sulfur can be provided by H(2)S. The protein is Thiazole synthase of Anaeromyxobacter dehalogenans (strain 2CP-1 / ATCC BAA-258).